A 538-amino-acid chain; its full sequence is Cytochrome c-552 (538 aa).

The first 55 residues, 1-55 (MKIYLRFVWILIIILNFLLNLFITTNGVIIVNAFKKSLIVAASFASLSLFNSATA), serve as a signal peptide directing secretion. H133 lines the heme c pocket. C161, C164, and K165 together coordinate heme. Residues C199, C202, H203, C264, C267, and H268 each coordinate heme c. Positions 270, 271, 316, and 318 each coordinate Ca(2+). Residue Y271 participates in substrate binding. H319 provides a ligand contact to substrate. Positions 330, 337, 340, 341, 356, 369, 372, 373, and 448 each coordinate heme c.

Belongs to the cytochrome c-552 family. Ca(2+) is required as a cofactor. The cofactor is heme c.

It localises to the periplasm. It carries out the reaction 6 Fe(III)-[cytochrome c] + NH4(+) + 2 H2O = 6 Fe(II)-[cytochrome c] + nitrite + 8 H(+). It participates in nitrogen metabolism; nitrate reduction (assimilation). In terms of biological role, catalyzes the reduction of nitrite to ammonia, consuming six electrons in the process. The chain is Cytochrome c-552 from Haemophilus influenzae (strain 86-028NP).